Reading from the N-terminus, the 292-residue chain is 33 kDa chaperonin (292 aa).

Cystine bridges form between Cys-230–Cys-232 and Cys-263–Cys-266.

It belongs to the HSP33 family. Post-translationally, under oxidizing conditions two disulfide bonds are formed involving the reactive cysteines. Under reducing conditions zinc is bound to the reactive cysteines and the protein is inactive.

Its subcellular location is the cytoplasm. Functionally, redox regulated molecular chaperone. Protects both thermally unfolding and oxidatively damaged proteins from irreversible aggregation. Plays an important role in the bacterial defense system toward oxidative stress. This is 33 kDa chaperonin from Salmonella choleraesuis (strain SC-B67).